The following is a 146-amino-acid chain: Hemoglobin subunit beta (146 aa).

In terms of domain architecture, Globin spans 2–146 (HWSAEEKQLI…VAHALARKYH (145 aa)). Heme b contacts are provided by His63 and His92.

Belongs to the globin family. Heterotetramer of two alpha chains and two beta chains. As to expression, red blood cells.

Its function is as follows. Involved in oxygen transport from the lung to the various peripheral tissues. The sequence is that of Hemoglobin subunit beta (HBB) from Anseranas semipalmata (Magpie goose).